Consider the following 212-residue polypeptide: Pyridoxine/pyridoxamine 5'-phosphate oxidase (212 aa).

Substrate contacts are provided by residues 7 to 10 (RREY) and Lys66. FMN contacts are provided by residues 61 to 66 (RIVLLK), 76 to 77 (YT), Arg82, Lys83, and Gln105. Substrate contacts are provided by Tyr123, Arg127, and Ser131. FMN contacts are provided by residues 140-141 (QS) and Trp185. 191–193 (RLH) is a binding site for substrate. An FMN-binding site is contributed by Arg195.

This sequence belongs to the pyridoxamine 5'-phosphate oxidase family. As to quaternary structure, homodimer. Requires FMN as cofactor.

It carries out the reaction pyridoxamine 5'-phosphate + O2 + H2O = pyridoxal 5'-phosphate + H2O2 + NH4(+). The enzyme catalyses pyridoxine 5'-phosphate + O2 = pyridoxal 5'-phosphate + H2O2. It participates in cofactor metabolism; pyridoxal 5'-phosphate salvage; pyridoxal 5'-phosphate from pyridoxamine 5'-phosphate: step 1/1. The protein operates within cofactor metabolism; pyridoxal 5'-phosphate salvage; pyridoxal 5'-phosphate from pyridoxine 5'-phosphate: step 1/1. In terms of biological role, catalyzes the oxidation of either pyridoxine 5'-phosphate (PNP) or pyridoxamine 5'-phosphate (PMP) into pyridoxal 5'-phosphate (PLP). The chain is Pyridoxine/pyridoxamine 5'-phosphate oxidase from Hahella chejuensis (strain KCTC 2396).